Reading from the N-terminus, the 94-residue chain is Selenoprotein K (94 aa).

Residues 20–42 form a helical membrane-spanning segment; it reads LSFITDFFWGIAEFVVLFFRTLL. Positions 48 to 94 are disordered; it reads KRRGYGGSSDSRYDDGRGPPGNPPRRMGRINHLRGPNPPPMAGGUGR. Position 92 (selenocysteine 92) is a non-standard amino acid, selenocysteine.

This sequence belongs to the selenoprotein K family. Interacts with DERL1, DERL2, DERL3 and SELENOS. The SELENOK-SELENOS complex interacts with VCP. Interacts with ZDHHC6. Post-translationally, cleaved by CAPN2/m-calpain in resting macrophages but not in activated macrophages. Macrophage activation up-regulates expression of the calpain inhibitor CAST/calpastatin, resulting in inhibition of CAPN2 activity. In terms of processing, truncated SELENOK proteins produced by failed UGA/Sec decoding are ubiquitinated by the CRL2(KLHDC2) complex, which recognizes the diglycine (Gly-Gly) at the C-terminus of truncated SELENOK proteins.

It is found in the endoplasmic reticulum membrane. Its subcellular location is the cell membrane. Its function is as follows. Required for Ca(2+) flux in immune cells and plays a role in T-cell proliferation and in T-cell and neutrophil migration. Involved in endoplasmic reticulum-associated degradation (ERAD) of soluble glycosylated proteins. Required for palmitoylation and cell surface expression of CD36 and involved in macrophage uptake of low-density lipoprotein and in foam cell formation. Together with ZDHHC6, required for palmitoylation of ITPR1 in immune cells, leading to regulate ITPR1 stability and function. Plays a role in protection of cells from ER stress-induced apoptosis. Protects cells from oxidative stress when overexpressed in cardiomyocytes. The polypeptide is Selenoprotein K (Sus scrofa (Pig)).